We begin with the raw amino-acid sequence, 238 residues long: Ribonuclease PH (238 aa).

Phosphate is bound by residues Arg-86 and 124–126 (GTR).

The protein belongs to the RNase PH family. As to quaternary structure, homodimer. Has a tendency to aggregate into multimers. Mg(2+) serves as cofactor.

The catalysed reaction is tRNA(n+1) + phosphate = tRNA(n) + a ribonucleoside 5'-diphosphate. Phosphorolytic exoribonuclease that plays an important role in tRNA 3'-end maturation; has no activity on a tRNA precursor with a 3'-terminal phosphate group. In vitro is freely reversible, adds nucleotides to the ends of RNA molecules by using nucleoside diphosphates as substrates, but this may not be physiologically important. Probably plays a role in initiation of 16S rRNA degradation (leading to ribosome degradation) during starvation. This Escherichia coli (strain K12 / MC4100 / BW2952) protein is Ribonuclease PH.